A 507-amino-acid chain; its full sequence is DNA ligase B (507 aa).

Positions 1 to 172 are not required for adenylyltransferase activity, required for nick joining; sequence MLLHDVAITS…AAAAGLSGAA (172 aa). Position 209 (E209) interacts with ATP. K211 acts as the N6-AMP-lysine intermediate in catalysis. ATP contacts are provided by R216, R231, E260, F300, R372, and K378.

It belongs to the ATP-dependent DNA ligase family. Monomer. Mg(2+) is required as a cofactor.

The enzyme catalyses ATP + (deoxyribonucleotide)n-3'-hydroxyl + 5'-phospho-(deoxyribonucleotide)m = (deoxyribonucleotide)n+m + AMP + diphosphate.. In terms of biological role, DNA ligase that seals nicks in double-stranded DNA during DNA replication, DNA recombination and DNA repair. The polypeptide is DNA ligase B (ligB) (Mycobacterium tuberculosis (strain ATCC 25618 / H37Rv)).